The sequence spans 214 residues: Type IV major pilin protein PilE1 (214 aa).

Residues 1–7 constitute a propeptide, leader sequence; it reads MNTLQKG. F8 carries the post-translational modification N-methylphenylalanine. A helical transmembrane segment spans residues 8-28; the sequence is FTLIELMIVIAIVGILAAVAL. An intrachain disulfide couples C127 to C161. A disordered region spans residues 182–214; that stretch reads AGTDAVTADTTGKDKEIDTKHLPSTCRDKSSAE. Residues 192–214 show a composition bias toward basic and acidic residues; it reads TGKDKEIDTKHLPSTCRDKSSAE.

It belongs to the N-Me-Phe pilin family. The pili are polar flexible filaments of about 5.4 nanometers diameter and 2.5 micrometers average length; they consist of only a single polypeptide chain arranged in a helical configuration of five subunits per turn in the assembled pilus.

The protein resides in the fimbrium. It is found in the membrane. Its function is as follows. Major component of the type IV pilus (T4P) that plays a role in cellular adherence, microcolony formation, resistance to neutrophil mediated killing, twitching motility as well as transformation. Mediates the attachment and the formation of bacterial microcolonies on host epithelial cells. Mechanistically, pili retractation induces host NF-kappa-B activation in infected cells, which is temporally associated with the formation of gonococcal microcolonies. The polypeptide is Type IV major pilin protein PilE1 (pilE1) (Neisseria gonorrhoeae).